The following is a 270-amino-acid chain: Thymidylate synthase (270 aa).

Residues Arg28 and 133-134 each bind dUMP; that span reads RR. The active-site Nucleophile is the Cys153. DUMP contacts are provided by residues 173–176, Asn184, and 214–216; these read RSAD and HIY. Asp176 is a (6R)-5,10-methylene-5,6,7,8-tetrahydrofolate binding site. Residue Ala269 coordinates (6R)-5,10-methylene-5,6,7,8-tetrahydrofolate.

Belongs to the thymidylate synthase family. Bacterial-type ThyA subfamily. In terms of assembly, homodimer.

Its subcellular location is the cytoplasm. The enzyme catalyses dUMP + (6R)-5,10-methylene-5,6,7,8-tetrahydrofolate = 7,8-dihydrofolate + dTMP. It functions in the pathway pyrimidine metabolism; dTTP biosynthesis. Catalyzes the reductive methylation of 2'-deoxyuridine-5'-monophosphate (dUMP) to 2'-deoxythymidine-5'-monophosphate (dTMP) while utilizing 5,10-methylenetetrahydrofolate (mTHF) as the methyl donor and reductant in the reaction, yielding dihydrofolate (DHF) as a by-product. This enzymatic reaction provides an intracellular de novo source of dTMP, an essential precursor for DNA biosynthesis. The sequence is that of Thymidylate synthase from Corynebacterium diphtheriae (strain ATCC 700971 / NCTC 13129 / Biotype gravis).